A 1959-amino-acid chain; its full sequence is Zinc finger protein hangover (1959 aa).

Residues 79-155 (NCCRLCIAPQ…FSSQAKQRQW (77 aa)) enclose the ZAD domain. Positions 81, 84, 128, and 131 each coordinate Zn(2+). The disordered stretch occupies residues 178-208 (GFFDQHLHQQQQHHQHLENELEAEKEKATPT). Residues 192 to 205 (QHLENELEAEKEKA) are compositionally biased toward basic and acidic residues. Residue serine 228 is modified to Phosphoserine. The residue at position 246 (threonine 246) is a Phosphothreonine. Residues 318–341 (ASCRACSLQFSTRANARRHERNLH) form a C2H2-type 1 zinc finger. Residues 447–469 (MTCRCCNKYFSTYKNFMAHVRKK) form a C2H2-type 2; degenerate zinc finger. Residues 581–604 (YECKLCPKGFRTKHEFRTHVYDKH) form a C2H2-type 3 zinc finger. Positions 674 to 762 (AVSDNASTTG…ANRDASAPKS (89 aa)) are disordered. The span at 677-693 (DNASTTGSGMARSNSME) shows a compositional bias: polar residues. Serine 680 is modified (phosphoserine). 2 stretches are compositionally biased toward low complexity: residues 716-727 (SSSAAPPLTSTP) and 741-759 (TSASAAAAAQSSANRDASA). 2 C2H2-type zinc fingers span residues 770–793 (QVCPICGQQYNNYNNVLRHMESKH) and 801–824 (YKCVRCGLGYPRISYLREHMINVH). Residues serine 832, serine 894, serine 895, serine 898, and serine 899 each carry the phosphoserine modification. The C2H2-type 6 zinc finger occupies 908-930 (KECPICNAVFSNNIGLSNHMRSH). A disordered region spans residues 960–991 (TDSELGVGGTMSESAPATPANVPPAMANQTPQ). 5 C2H2-type zinc fingers span residues 1011 to 1034 (MRCRICQRRFSSKKSYRYHMLTDH), 1042 to 1065 (IKCKLCNAEFAYEKGLKVHLFKVH), 1078 to 1101 (FECDVCSIVYSSESELQQHKRSVH), 1154 to 1176 (YQCKYCPSNFNTNKKLAIHINSH), and 1184 to 1207 (YSCKDCGNVYSGRKSLWVHRYKKH). The segment covering 1233–1253 (TPTCNRKPITSTGAHQQQDGQ) has biased composition (polar residues). A disordered region spans residues 1233-1301 (TPTCNRKPIT…GNGTTVGVAS (69 aa)). Over residues 1255–1267 (HSHHTAKRTIFRH) the composition is skewed to basic residues. Residues 1271–1283 (DDDDEEDDDEQQQ) are compositionally biased toward acidic residues. 2 consecutive C2H2-type zinc fingers follow at residues 1318 to 1340 (VACTICGARFTDQEHFSKHIQKH) and 1375 to 1397 (YACDLCAKTFPQVIALKVHRKWH). Over residues 1445–1467 (QQSLNNSCNSSMNHNNNSSSNRS) the composition is skewed to low complexity. Residues 1445-1471 (QQSLNNSCNSSMNHNNNSSSNRSKSMK) form a disordered region. C2H2-type zinc fingers lie at residues 1476–1499 (LKCEYCASTFISNNNLRRHMYELH) and 1552–1574 (WGCDLCGEYLSRKEKLMNHINNH). Residues 1627-1865 (AAGATTTDKL…STGERRKKAV (239 aa)) form a disordered region. Acidic residues predominate over residues 1639–1695 (PDEEDSDDLDEDSSGDDDDSSGTGDDDDDDDSDDDEDGEGEDEDEEGDGGEGEDEEG). Low complexity predominate over residues 1697–1715 (QPPAQLLPQQQHKTDLNLN). Acidic residues-rich tracts occupy residues 1716–1758 (QDDD…EEPE) and 1782–1829 (SDDE…EDEP). Residues 1833–1851 (STASFSESESSTTTTSNSH) show a composition bias toward low complexity. The segment at 1873–1895 (FTCDLCQLCFDSQELLQSHIKSH) adopts a C2H2-type 16 zinc-finger fold. The segment at 1933 to 1959 (PDSKSAVLANNNNSKTSSKTVAAGATN) is disordered. Over residues 1942 to 1952 (NNNNSKTSSKT) the composition is skewed to low complexity.

Expressed ubiquitously in the nervous system, in neurons not glia.

It localises to the nucleus. Functionally, required for normal development of ethanol tolerance. Relies on two distinct molecular pathways: a cellular stress pathway defined by hang, and a parallel pathway requiring octopamine. The sequence is that of Zinc finger protein hangover (hang) from Drosophila melanogaster (Fruit fly).